The primary structure comprises 304 residues: Non-specific ribonucleoside hydrolase RihC (304 aa).

His-233 is an active-site residue.

The protein belongs to the IUNH family. RihC subfamily.

Functionally, hydrolyzes both purine and pyrimidine ribonucleosides with a broad-substrate specificity. This chain is Non-specific ribonucleoside hydrolase RihC, found in Escherichia coli O6:H1 (strain CFT073 / ATCC 700928 / UPEC).